A 350-amino-acid chain; its full sequence is Protein-arginine kinase (350 aa).

The Phosphagen kinase C-terminal domain occupies 21–253; the sequence is IVISSRIRLA…VRLADQEREA (233 aa). ATP-binding positions include 24–28, H90, R124, 175–179, and 206–211; these read SSRIR, RASTM, and RGLYGE. The RDXXRA motif of the pArg binding pocket involved in allosteric regulation signature appears at 336–341; it reads RDVHRA.

It belongs to the ATP:guanido phosphotransferase family.

It catalyses the reaction L-arginyl-[protein] + ATP = N(omega)-phospho-L-arginyl-[protein] + ADP + H(+). Its activity is regulated as follows. Appears to be allosterically activated by the binding of pArg-containing polypeptides to the pArg-binding pocket localized in the C-terminal domain of McsB. Catalyzes the specific phosphorylation of arginine residues in proteins. In Moorella thermoacetica (strain ATCC 39073 / JCM 9320), this protein is Protein-arginine kinase.